The sequence spans 110 residues: Small ribosomal subunit protein bS16 (110 aa).

Residues 87–110 (ARNNPEKAVPRKERKAAAEAAAKK) are disordered.

Belongs to the bacterial ribosomal protein bS16 family.

The polypeptide is Small ribosomal subunit protein bS16 (Rhodopseudomonas palustris (strain HaA2)).